A 214-amino-acid chain; its full sequence is Phosphatidylcholine transfer protein (214 aa).

At Met1 the chain carries N-acetylmethionine. Residues 1–212 form the START domain; the sequence is MAGPAAHFSD…MVKACQNYHK (212 aa). A 1,2-diacyl-sn-glycero-3-phosphocholine-binding residues include Tyr72 and Arg78. Residue Ser139 is modified to Phosphoserine. Gln157 serves as a coordination point for a 1,2-diacyl-sn-glycero-3-phosphocholine.

As to quaternary structure, interacts with ACOT13/THEM2.

The protein resides in the cytoplasm. Lipid transfer protein that promotes intermembrane transfer of phosphatidylcholines but no other phospholipids. Binds a single lipid molecule. May play a role in hepatocellular selection and transport of phosphatidylcholines during bile formation. In Rattus norvegicus (Rat), this protein is Phosphatidylcholine transfer protein (Pctp).